The primary structure comprises 399 residues: Tyrosine--tRNA ligase (399 aa).

The 'HIGH' region motif lies at 42 to 51 (PTAPDIHLGH). Positions 226–230 (KMSKS) match the 'KMSKS' region motif. Lys-229 provides a ligand contact to ATP. The region spanning 337-398 (LTIGYILQRA…GKRRFAKVKV (62 aa)) is the S4 RNA-binding domain.

The protein belongs to the class-I aminoacyl-tRNA synthetase family. TyrS type 2 subfamily. Homodimer.

The protein localises to the cytoplasm. It carries out the reaction tRNA(Tyr) + L-tyrosine + ATP = L-tyrosyl-tRNA(Tyr) + AMP + diphosphate + H(+). Catalyzes the attachment of tyrosine to tRNA(Tyr) in a two-step reaction: tyrosine is first activated by ATP to form Tyr-AMP and then transferred to the acceptor end of tRNA(Tyr). This Coxiella burnetii (strain RSA 493 / Nine Mile phase I) protein is Tyrosine--tRNA ligase.